The sequence spans 428 residues: Somatostatin receptor type 3 (428 aa).

Over 1–45 (MAAVTYPSSVPTTLDPGNASSAWPLDTSLGNASAGTSLAGLAVSG) the chain is Extracellular. Asn-18 and Asn-31 each carry an N-linked (GlcNAc...) asparagine glycan. The helical transmembrane segment at 46–71 (ILISLVYLVVCVVGLLGNSLVIYVVL) threads the bilayer. Residues 72-81 (RHTSSPSVTS) are Cytoplasmic-facing. The helical transmembrane segment at 82 to 103 (VYILNLALADELFMLGLPFLAA) threads the bilayer. At 104–118 (QNALSYWPFGSLMCR) the chain is on the extracellular side. Residues Cys-117 and Cys-192 are joined by a disulfide bond. A helical transmembrane segment spans residues 119 to 140 (LVMAVDGINQFTSIFCLTVMSV). Residues 141-162 (DRYLAVVHPTRSARWRTAPVAR) lie on the Cytoplasmic side of the membrane. A helical membrane pass occupies residues 163–182 (MVSAAVWVASAVVVLPVVVF). Residues 183 to 206 (SGVPRGMSTCHMQWPEPAAAWRTA) lie on the Extracellular side of the membrane. The chain crosses the membrane as a helical span at residues 207–232 (FIIYTAALGFFGPLLVICLCYLLIVV). At 233–266 (KVRSTTRRVRAPSCQWVQAPACQRRRRSERRVTR) the chain is on the cytoplasmic side. Residues 267–288 (MVVAVVALFVLCWMPFYLLNIV) traverse the membrane as a helical segment. The Extracellular portion of the chain corresponds to 289–302 (NVVCPLPEEPAFFG). A helical transmembrane segment spans residues 303 to 325 (LYFLVVALPYANSCANPILYGFL). Over 326-428 (SYRFKQGFRR…GDKASTLSHL (103 aa)) the chain is Cytoplasmic. Ser-341, Ser-346, and Ser-351 each carry phosphoserine. The segment at 343–428 (RVRSQEPGSG…GDKASTLSHL (86 aa)) is disordered. A Phosphothreonine modification is found at Thr-357. Positions 357–370 (TEEEEDEEEEERRE) are enriched in acidic residues. The segment covering 385–412 (RLSQIAQPGPSGQQQRPCTGTAKEQQLL) has biased composition (polar residues).

This sequence belongs to the G-protein coupled receptor 1 family. Homodimer and heterodimer with SSTR2. Heterodimerization with SSTR2 inactivates SSTR3 receptor function. Phosphorylated. Phosphorylation increases upon somatostatin binding. Densely expressed in cerebellum and at moderate levels in the amygdala, cortex, striatum, spleen, liver and pituitary.

It localises to the cell membrane. Functionally, receptor for somatostatin-14 and -28. This receptor is coupled via pertussis toxin sensitive G proteins to inhibition of adenylyl cyclase. This Rattus norvegicus (Rat) protein is Somatostatin receptor type 3 (Sstr3).